Here is a 183-residue protein sequence, read N- to C-terminus: ATP synthase subunit delta (183 aa).

This sequence belongs to the ATPase delta chain family. In terms of assembly, F-type ATPases have 2 components, F(1) - the catalytic core - and F(0) - the membrane proton channel. F(1) has five subunits: alpha(3), beta(3), gamma(1), delta(1), epsilon(1). F(0) has three main subunits: a(1), b(2) and c(10-14). The alpha and beta chains form an alternating ring which encloses part of the gamma chain. F(1) is attached to F(0) by a central stalk formed by the gamma and epsilon chains, while a peripheral stalk is formed by the delta and b chains.

The protein localises to the cell inner membrane. Functionally, f(1)F(0) ATP synthase produces ATP from ADP in the presence of a proton or sodium gradient. F-type ATPases consist of two structural domains, F(1) containing the extramembraneous catalytic core and F(0) containing the membrane proton channel, linked together by a central stalk and a peripheral stalk. During catalysis, ATP synthesis in the catalytic domain of F(1) is coupled via a rotary mechanism of the central stalk subunits to proton translocation. Its function is as follows. This protein is part of the stalk that links CF(0) to CF(1). It either transmits conformational changes from CF(0) to CF(1) or is implicated in proton conduction. This is ATP synthase subunit delta from Syntrophobacter fumaroxidans (strain DSM 10017 / MPOB).